Consider the following 454-residue polypeptide: Bifunctional protein GlmU (454 aa).

Positions 1 to 232 (MTDRTCLSIV…VDNVIGINNR (232 aa)) are pyrophosphorylase. UDP-N-acetyl-alpha-D-glucosamine-binding positions include 11-14 (LAAG), K25, Q78, and 83-84 (GT). Residue D108 coordinates Mg(2+). UDP-N-acetyl-alpha-D-glucosamine is bound by residues G144, E158, N173, and N230. N230 lines the Mg(2+) pocket. A linker region spans residues 233–253 (VELAEAEAIWQQRKRREMMLA). Residues 254–454 (GVTLIAPETV…AIKAAKTATK (201 aa)) form an N-acetyltransferase region. Positions 319 and 337 each coordinate UDP-N-acetyl-alpha-D-glucosamine. Catalysis depends on H349, which acts as the Proton acceptor. UDP-N-acetyl-alpha-D-glucosamine is bound by residues Y352 and N363. Residues A366, 372 to 373 (NY), S391, S409, and R426 contribute to the acetyl-CoA site.

It in the N-terminal section; belongs to the N-acetylglucosamine-1-phosphate uridyltransferase family. The protein in the C-terminal section; belongs to the transferase hexapeptide repeat family. As to quaternary structure, homotrimer. Requires Mg(2+) as cofactor.

The protein localises to the cytoplasm. The enzyme catalyses alpha-D-glucosamine 1-phosphate + acetyl-CoA = N-acetyl-alpha-D-glucosamine 1-phosphate + CoA + H(+). It carries out the reaction N-acetyl-alpha-D-glucosamine 1-phosphate + UTP + H(+) = UDP-N-acetyl-alpha-D-glucosamine + diphosphate. It functions in the pathway nucleotide-sugar biosynthesis; UDP-N-acetyl-alpha-D-glucosamine biosynthesis; N-acetyl-alpha-D-glucosamine 1-phosphate from alpha-D-glucosamine 6-phosphate (route II): step 2/2. Its pathway is nucleotide-sugar biosynthesis; UDP-N-acetyl-alpha-D-glucosamine biosynthesis; UDP-N-acetyl-alpha-D-glucosamine from N-acetyl-alpha-D-glucosamine 1-phosphate: step 1/1. The protein operates within bacterial outer membrane biogenesis; LPS lipid A biosynthesis. Catalyzes the last two sequential reactions in the de novo biosynthetic pathway for UDP-N-acetylglucosamine (UDP-GlcNAc). The C-terminal domain catalyzes the transfer of acetyl group from acetyl coenzyme A to glucosamine-1-phosphate (GlcN-1-P) to produce N-acetylglucosamine-1-phosphate (GlcNAc-1-P), which is converted into UDP-GlcNAc by the transfer of uridine 5-monophosphate (from uridine 5-triphosphate), a reaction catalyzed by the N-terminal domain. The protein is Bifunctional protein GlmU of Brucella anthropi (strain ATCC 49188 / DSM 6882 / CCUG 24695 / JCM 21032 / LMG 3331 / NBRC 15819 / NCTC 12168 / Alc 37) (Ochrobactrum anthropi).